The primary structure comprises 897 residues: High molecular weight rhoptry protein 3 (897 aa).

The first 24 residues, Met1–Gly24, serve as a signal peptide directing secretion. Disulfide bonds link Cys157–Cys231, Cys244–Cys253, Cys262–Cys276, Cys421–Cys620, and Cys475–Cys536. The helical transmembrane segment at Phe597–Tyr615 threads the bilayer. Disordered stretches follow at residues Lys788 to Lys845 and Gln859 to Leu897. The segment covering Lys792–Asp801 has biased composition (polar residues). A compositionally biased stretch (low complexity) spans Glu802–Gly817. Ser804 carries the phosphoserine modification. The segment covering Gly820–Met832 has biased composition (basic and acidic residues). Over residues Pro865 to Arg876 the composition is skewed to basic residues. Residues Asp877–Lys889 show a composition bias toward basic and acidic residues.

As to quaternary structure, component of the RhopH complex, composed of CLAG3.1/CLAG3.2, RhopH2 and RhopH3 with a 1:1:1 subunit stoichiometry. Interacts with CLAG3.1/CLAG3.2. Interacts with CDPK1; the interaction promotes RhopH3 phosphorylation in merozoites. In terms of processing, proteolytically cleaved near C-terminus.

The protein resides in the host cell membrane. Its subcellular location is the parasitophorous vacuole membrane. It localises to the cytoplasmic vesicle. The protein localises to the secretory vesicle. It is found in the rhoptry. Its function is as follows. Participates in the formation of new permeability pathways in Plasmodium-infected erythrocytes enabling the uptake of nutrients from the blood plasma. Required for maintaining invasion capacity of merozoites. Required for the trophozoite to schizont developmental transition of the intracellular parasite. In Plasmodium falciparum, this protein is High molecular weight rhoptry protein 3.